The sequence spans 450 residues: tRNA modification GTPase MnmE (450 aa).

(6S)-5-formyl-5,6,7,8-tetrahydrofolate contacts are provided by R23, E79, and K118. Residues 214–374 (GITLILVGKP…LKEHILNKVG (161 aa)) form the TrmE-type G domain. Position 224 (N224) interacts with K(+). GTP is bound by residues 224 to 229 (NAGKSS), 243 to 249 (TSIAGTT), and 268 to 271 (DTAG). Mg(2+) is bound at residue S228. Residues T243, I245, and T248 each coordinate K(+). Position 249 (T249) interacts with Mg(2+). K450 is a binding site for (6S)-5-formyl-5,6,7,8-tetrahydrofolate.

The protein belongs to the TRAFAC class TrmE-Era-EngA-EngB-Septin-like GTPase superfamily. TrmE GTPase family. In terms of assembly, homodimer. Heterotetramer of two MnmE and two MnmG subunits. The cofactor is K(+).

It is found in the cytoplasm. Exhibits a very high intrinsic GTPase hydrolysis rate. Involved in the addition of a carboxymethylaminomethyl (cmnm) group at the wobble position (U34) of certain tRNAs, forming tRNA-cmnm(5)s(2)U34. The sequence is that of tRNA modification GTPase MnmE from Francisella tularensis subsp. tularensis (strain WY96-3418).